The sequence spans 296 residues: MFARIARINPKILPFVIGAPTIALCSYYYSSGAFLRNESSKVFIGDNNWIDLPISRIEEISHDTKRFTFKYPSQDSVSGLVVASALLTKFVTPKGSNVIRPYTPVSDVDEKGSLDLVIKHYPDGKMTNHIFSLKVNDTLSFKGPIPKWKWVPNSFESITLIGGGTGITPLYQLIHAITKNPNDKTKIRLFYSNKTSQDVLMKKELDELQAKYPDQLRITYFITTPDKGYKGESGFISKEFIASNADKPSPKSHVFVCGPPPFMNAYSGDKKSPTDQGELVGILKELGYTIDQVYKF.

The helical transmembrane segment at 15 to 35 threads the bilayer; the sequence is FVIGAPTIALCSYYYSSGAFL. An FAD-binding FR-type domain is found at 47 to 151; the sequence is NNWIDLPISR…KGPIPKWKWV (105 aa). An FAD-binding site is contributed by 154–189; the sequence is SFESITLIGGGTGITPLYQLIHAITKNPNDKTKIRL.

It belongs to the flavoprotein pyridine nucleotide cytochrome reductase family. FAD is required as a cofactor.

Its subcellular location is the mitochondrion outer membrane. The enzyme catalyses 2 Fe(III)-[cytochrome b5] + NADH = 2 Fe(II)-[cytochrome b5] + NAD(+) + H(+). Its function is as follows. May mediate the reduction of outer membrane cytochrome b5. The protein is NADH-cytochrome b5 reductase 2-A (MCR1A) of Vanderwaltozyma polyspora (strain ATCC 22028 / DSM 70294 / BCRC 21397 / CBS 2163 / NBRC 10782 / NRRL Y-8283 / UCD 57-17) (Kluyveromyces polysporus).